The primary structure comprises 107 residues: Replication initiation control protein YabA (107 aa).

Zn(2+)-binding residues include His-80, Cys-82, Cys-97, and Cys-100.

It belongs to the YabA family. In terms of assembly, homotetramer. Interacts with both DnaA and DnaN, acting as a bridge between these two proteins. Requires Zn(2+) as cofactor.

It is found in the cytoplasm. It localises to the nucleoid. Involved in control of chromosome replication initiation. Inhibits the cooperative binding of DnaA to the oriC region, thus negatively regulating initiation of chromosome replication. Inhibits the ability of DnaA-ATP to form a helix on DNA; does not disassemble preformed DnaA-DNA helices. Decreases the residence time of DnaA on the chromosome at its binding sites (oriC, replication forks and promoter-binding sites). Tethers DnaA to the replication machinery via the DNA polymerase beta sliding clamp subunit (dnaN). Associates with oriC and other DnaA targets on the chromosome in a DnaA-dependent manner. The chain is Replication initiation control protein YabA from Streptococcus gordonii (strain Challis / ATCC 35105 / BCRC 15272 / CH1 / DL1 / V288).